The sequence spans 1299 residues: MAAETQTLNFGPEWLRALSSGGSITSPPLSPALPKYKLADYRYGREEMLALFLKDNKIPSDLLDKEFLPILQEEPLPPLALVPFTEEEQRNFSMSVNSAAVLRLTGRGGGGTVVGAPRGRSSSRGRGRGRGECGFYQRSFDEVEGVFGRGGGREMHRSQSWEERGDRRFEKPGRKDVGRPNFEEGGPTSVGRKHEFIRSESENWRIFREEQNGEDEDGGWRLAGSRRDGERWRPHSPDGPRSAGWREHMERRRRFEFDFRDRDDERGYRRVRSGSGSIDDDRDSLPEWCLEDAEEEMGTFDSSGAFLSLKKVQKEPIPEEQEMDFRPVDEGEECSDSEGSHNEEAKEPDKTNKKEGEKTDRVGVEASEETPQTSSSSARPGTPSDHQSQEASQFERKDEPKTEQTEKAEEETRMENSLPAKVPSRGDEMVADVQQPLSQIPSDTASPLLILPPPVPNPSPTLRPVETPVVGAPGMGSVSTEPDDEEGLKHLEQQAEKMVAYLQDSALDDERLASKLQEHRAKGVSIPLMHEAMQKWYYKDPQGEIQGPFNNQEMAEWFQAGYFTMSLLVKRACDESFQPLGDIMKMWGRVPFSPGPAPPPHMGELDQERLTRQQELTALYQMQHLQYQQFLIQQQYAQVLAQQQKAALSSQQQQQLALLLQQFQTLKMRISDQNIIPSVTRSVSVPDTGSIWELQPTASQPTVWEGGSVWDLPLDTTTPGPALEQLQQLEKAKAAKLEQERREAEMRAKREEEERKRQEELRRQQEEILRRQQEEERKRREEEELARRKQEEALRRQREQEIALRRQREEEERQQQEEALRRLEERRREEEERRKQEELLRKQEEEAAKWAREEEEAQRRLEENRLRMEEEAARLRHEEEERKRKELEVQRQKELMRQRQQQQEALRRLQQQQQQQQLAQMKLPSSSTWGQQSNTTACQSQATLSLAEIQKLEEERERQLREEQRRQQRELMKALQQQQQQQQQKLSGWGNVSKPSGTTKSLLEIQQEEARQMQKQQQQQQQHQQPNRARNNTHSNLHTSIGNSVWGSINTGPPNQWASDLVSSIWSNADTKNSNMGFWDDAVKEVGPRNSTNKNKNNASLSKSVGVSNRQNKKVEEEEKLLKLFQGVNKAQDGFTQWCEQMLHALNTANNLDVPTFVSFLKEVESPYEVHDYIRAYLGDTSEAKEFAKQFLERRAKQKANQQRQQQQLPQQQQQQPPQQPPQQPQQQDSVWGMNHSTLHSVFQTNQSNNQQSNFEAVQSGKKKKKQKMVRADPSLLGFSVNASSERLNMGEIETLDDY.

An N-acetylalanine modification is found at alanine 2. Phosphoserine occurs at positions 19, 26, and 30. The 4EHP-binding motif signature appears at 40–50 (DYRYGREEMLA). Omega-N-methylarginine is present on residues arginine 107, arginine 118, and arginine 120. The segment at 112–131 (TVVGAPRGRSSSRGRGRGRG) is disordered. Serine 139 bears the Phosphoserine mark. 3 disordered regions span residues 147–195 (FGRG…RKHE), 214–247 (EDED…GWRE), and 266–433 (RGYR…VADV). Arginine 149 bears the Omega-N-methylarginine mark. The span at 151-182 (GGREMHRSQSWEERGDRRFEKPGRKDVGRPNF) shows a compositional bias: basic and acidic residues. Phosphoserine is present on residues serine 160, serine 189, and serine 236. Residues 225–247 (SRRDGERWRPHSPDGPRSAGWRE) are compositionally biased toward basic and acidic residues. A DDX6 binding motif motif is present at residues 280–310 (DDRDSLPEWCLEDAEEEMGTFDSSGAFLSLK). A compositionally biased stretch (acidic residues) spans 289-298 (CLEDAEEEMG). 2 stretches are compositionally biased toward basic and acidic residues: residues 312 to 329 (VQKE…RPVD) and 338 to 363 (EGSH…DRVG). Polar residues predominate over residues 369–392 (ETPQTSSSSARPGTPSDHQSQEAS). Threonine 382 bears the Phosphothreonine mark. Serine 388 is modified (phosphoserine). Basic and acidic residues predominate over residues 393–414 (QFERKDEPKTEQTEKAEEETRM). One can recognise a GYF domain in the interval 533-581 (MQKWYYKDPQGEIQGPFNNQEMAEWFQAGYFTMSLLVKRACDESFQPLG). A required for GRB10-binding region spans residues 547 to 563 (GPFNNQEMAEWFQAGYF). Position 593 is a phosphoserine (serine 593). 7 disordered regions span residues 733–793 (KAAK…QEEA), 845–866 (EEAA…ENRL), 872–891 (AARL…EVQR), 917–936 (QLAQ…SNTT), 957–997 (ERQL…KPSG), 1009–1048 (EARQ…VWGS), and 1084–1112 (KEVG…NRQN). A required for interaction with SARS-CoV-2 non-structural protein 2 (nsp2) region spans residues 860–919 (RLEENRLRMEEEAARLRHEEEERKRKELEVQRQKELMRQRQQQQEALRRLQQQQQQQQLA). Polar residues predominate over residues 924–936 (PSSSTWGQQSNTT). The span at 957-972 (ERQLREEQRRQQRELM) shows a compositional bias: basic and acidic residues. Serine 993 carries the post-translational modification Phosphoserine. A compositionally biased stretch (low complexity) spans 1013 to 1025 (MQKQQQQQQQHQQ). The segment covering 1026 to 1048 (PNRARNNTHSNLHTSIGNSVWGS) has biased composition (polar residues). Low complexity predominate over residues 1090–1104 (NSTNKNKNNASLSKS). A Glycyl lysine isopeptide (Lys-Gly) (interchain with G-Cter in SUMO2) cross-link involves residue lysine 1123. Disordered regions lie at residues 1195–1230 (RAKQ…QQDS) and 1247–1271 (QSNN…KMVR). Residues 1202–1217 (QQRQQQQLPQQQQQQP) are compositionally biased toward low complexity. Serine 1284 is modified (phosphoserine).

The protein belongs to the GIGYF family. In terms of assembly, component of the 4EHP-GYF2 complex, at least composed of EIF4E2, GIGYF2 and ZNF598. Interacts (via the 4EHP-binding motif) with EIF4E2; the interaction is direct. Interacts with ZFP36/TTP (via P-P-P-P-G repeats); the interaction is direct. Interacts with GRB10. Interacts (via DDX6 motif) with DDX6 (via RecA-like domain 2). As to quaternary structure, (Microbial infection) Interacts with SARS coronavirus-2/SARS-CoV-2 non-structural protein 2 (nsp2); the interaction enhances GIGYF2 binding to EIF4E2.

Key component of the 4EHP-GYF2 complex, a multiprotein complex that acts as a repressor of translation initiation. In the 4EHP-GYF2 complex, acts as a factor that bridges EIF4E2 to ZFP36/TTP, linking translation repression with mRNA decay. Also recruits and bridges the association of the 4EHP complex with the decapping effector protein DDX6, which is required for the ZFP36/TTP-mediated down-regulation of AU-rich mRNA. May act cooperatively with GRB10 to regulate tyrosine kinase receptor signaling, including IGF1 and insulin receptors. In association with EIF4E2, assists ribosome-associated quality control (RQC) by sequestering the mRNA cap, blocking ribosome initiation and decreasing the translational load on problematic messages. Part of a pathway that works in parallel to RQC-mediated degradation of the stalled nascent polypeptide. GIGYF2 and EIF4E2 work downstream and independently of ZNF598, which seems to work as a scaffold that can recruit them to faulty mRNA even if alternative recruitment mechanisms may exist. Its function is as follows. (Microbial infection) Upon SARS coronavirus-2/SARS-CoV-2 infection, the interaction with non-structural protein 2 (nsp2) enhances GIGYF2 binding to EIF4E2 and increases repression of translation initiation of genes involved in antiviral innate immune response such as IFNB1. This is GRB10-interacting GYF protein 2 from Homo sapiens (Human).